The primary structure comprises 249 residues: Putative TrmH family tRNA/rRNA methyltransferase (249 aa).

Positions 196, 216, and 225 each coordinate S-adenosyl-L-methionine.

Belongs to the class IV-like SAM-binding methyltransferase superfamily. RNA methyltransferase TrmH family.

The chain is Putative TrmH family tRNA/rRNA methyltransferase from Staphylococcus epidermidis (strain ATCC 35984 / DSM 28319 / BCRC 17069 / CCUG 31568 / BM 3577 / RP62A).